A 108-amino-acid chain; its full sequence is Replication restart protein PriB (108 aa).

The SSB domain occupies 8–108; sequence VDNRFSLIGK…LHAEQIEFIE (101 aa).

Belongs to the PriB family. In terms of assembly, homodimer. Interacts with PriA and DnaT. Component of the replication restart primosome. Primosome assembly occurs via a 'hand-off' mechanism. PriA binds to replication forks, subsequently PriB then DnaT bind; DnaT then displaces ssDNA to generate the helicase loading substrate.

Involved in the restart of stalled replication forks, which reloads the replicative helicase on sites other than the origin of replication; the PriA-PriB pathway is the major replication restart pathway. During primosome assembly it facilitates complex formation between PriA and DnaT on DNA; stabilizes PriA on DNA. Stimulates the DNA unwinding activity of PriA helicase. The chain is Replication restart protein PriB from Histophilus somni (strain 129Pt) (Haemophilus somnus).